A 537-amino-acid polypeptide reads, in one-letter code: Glutamyl-tRNA(Gln) amidotransferase subunit B, chloroplastic/mitochondrial (537 aa).

The protein belongs to the GatB/GatE family. GatB subfamily. In terms of assembly, subunit of the heterotrimeric GatCAB amidotransferase (AdT) complex, composed of A, B and C subunits.

It localises to the mitochondrion. Its subcellular location is the plastid. The protein localises to the chloroplast. The enzyme catalyses L-glutamyl-tRNA(Gln) + L-glutamine + ATP + H2O = L-glutaminyl-tRNA(Gln) + L-glutamate + ADP + phosphate + H(+). Allows the formation of correctly charged Gln-tRNA(Gln) through the transamidation of misacylated Glu-tRNA(Gln) in chloroplasts and mitochondria. The reaction takes place in the presence of glutamine and ATP through an activated gamma-phospho-Glu-tRNA(Gln). In Ostreococcus tauri, this protein is Glutamyl-tRNA(Gln) amidotransferase subunit B, chloroplastic/mitochondrial.